Reading from the N-terminus, the 269-residue chain is Rhamnulose-1-phosphate aldolase (269 aa).

Glu119 is a catalytic residue. Positions 142, 144, and 214 each coordinate Zn(2+).

The protein belongs to the aldolase class II family. RhaD subfamily. Zn(2+) is required as a cofactor.

Its subcellular location is the cytoplasm. It catalyses the reaction L-rhamnulose 1-phosphate = (S)-lactaldehyde + dihydroxyacetone phosphate. Its pathway is carbohydrate degradation; L-rhamnose degradation; glycerone phosphate from L-rhamnose: step 3/3. Catalyzes the reversible cleavage of L-rhamnulose-1-phosphate to dihydroxyacetone phosphate (DHAP) and L-lactaldehyde. The sequence is that of Rhamnulose-1-phosphate aldolase from Bacteroides thetaiotaomicron (strain ATCC 29148 / DSM 2079 / JCM 5827 / CCUG 10774 / NCTC 10582 / VPI-5482 / E50).